The sequence spans 272 residues: Putative phosphoenolpyruvate synthase regulatory protein (272 aa).

Gly152–Thr159 lines the ADP pocket.

It belongs to the pyruvate, phosphate/water dikinase regulatory protein family. PSRP subfamily.

It carries out the reaction [pyruvate, water dikinase] + ADP = [pyruvate, water dikinase]-phosphate + AMP + H(+). It catalyses the reaction [pyruvate, water dikinase]-phosphate + phosphate + H(+) = [pyruvate, water dikinase] + diphosphate. In terms of biological role, bifunctional serine/threonine kinase and phosphorylase involved in the regulation of the phosphoenolpyruvate synthase (PEPS) by catalyzing its phosphorylation/dephosphorylation. The protein is Putative phosphoenolpyruvate synthase regulatory protein of Pseudomonas fluorescens (strain Pf0-1).